Consider the following 634-residue polypeptide: Threonine--tRNA ligase (634 aa).

The 61-residue stretch at 1 to 61 (MINIRFPDGS…NSNCELRLIT (61 aa)) folds into the TGS domain. The catalytic stretch occupies residues 241-532 (DHRKIGKVLD…LIEHYAGNLP (292 aa)). Zn(2+) contacts are provided by cysteine 332, histidine 383, and histidine 509.

This sequence belongs to the class-II aminoacyl-tRNA synthetase family. As to quaternary structure, homodimer. Requires Zn(2+) as cofactor.

The protein resides in the cytoplasm. The catalysed reaction is tRNA(Thr) + L-threonine + ATP = L-threonyl-tRNA(Thr) + AMP + diphosphate + H(+). Functionally, catalyzes the attachment of threonine to tRNA(Thr) in a two-step reaction: L-threonine is first activated by ATP to form Thr-AMP and then transferred to the acceptor end of tRNA(Thr). Also edits incorrectly charged L-seryl-tRNA(Thr). The chain is Threonine--tRNA ligase from Francisella tularensis subsp. holarctica (strain OSU18).